Reading from the N-terminus, the 129-residue chain is Small ribosomal subunit protein uS11 (129 aa).

Belongs to the universal ribosomal protein uS11 family. In terms of assembly, part of the 30S ribosomal subunit. Interacts with proteins S7 and S18. Binds to IF-3.

Located on the platform of the 30S subunit, it bridges several disparate RNA helices of the 16S rRNA. Forms part of the Shine-Dalgarno cleft in the 70S ribosome. In Aromatoleum aromaticum (strain DSM 19018 / LMG 30748 / EbN1) (Azoarcus sp. (strain EbN1)), this protein is Small ribosomal subunit protein uS11.